Reading from the N-terminus, the 560-residue chain is NRAMP-like transporter smf-3 (560 aa).

The Cytoplasmic segment spans residues 1 to 43; sequence MEGEMKCPIEEIREKPEMRKAQQTYEVQVEVEDTPDTTFSWRK. A helical membrane pass occupies residues 44-64; the sequence is LWAFTGPGFLMSIAYLDPGNI. At 65 to 71 the chain is on the extracellular side; the sequence is ESDLQAG. The helical transmembrane segment at 72 to 92 threads the bilayer; sequence AISYFKLIWVLLVAHIMGLLL. Over 93–120 the chain is Cytoplasmic; that stretch reads QRLAARLGVVSGKHMAEIAFSYYPKIPR. A helical transmembrane segment spans residues 121–141; that stretch reads LVLWMLVESAIVGSDMQEVIG. At 142–152 the chain is on the extracellular side; that stretch reads TAISFYLLSNG. A helical transmembrane segment spans residues 153 to 173; sequence VIPLWAGVLITICDTFTFLFL. Residues 174–182 lie on the Cytoplasmic side of the membrane; sequence EKYGVRKFE. The chain crosses the membrane as a helical span at residues 183-203; sequence AFFCFLITCMAITFGYEFGVS. Over 204–229 the chain is Extracellular; sequence APDAGKMFSGMFVPWCNGCDNNMVMQ. The chain crosses the membrane as a helical span at residues 230–250; it reads GVAIIGAVIMPHNFYLHSALV. The Cytoplasmic portion of the chain corresponds to 251–268; the sequence is KSRRVDRRRAEKVTEANK. A helical membrane pass occupies residues 269–289; that stretch reads YFFIESAFALFVSFIINTLVI. At 290 to 339 the chain is on the extracellular side; sequence SVFAQGMYGKTNQDIRDTCYNNTHNGMPDFYKVEFPANNDAAQSDIYHAG. Asn310 is a glycosylation site (N-linked (GlcNAc...) asparagine). A helical transmembrane segment spans residues 340–360; it reads IFLGCTFGIFALYVWAVGILA. Over 361-390 the chain is Cytoplasmic; sequence AGQSSTMTGTYAGQFAMEGFIQIKLPQWKR. A helical membrane pass occupies residues 391–411; that stretch reads ILITRSLAILPTLAVVIFSGG. Residues 412–420 lie on the Extracellular side of the membrane; it reads IDNISSLND. The N-linked (GlcNAc...) asparagine glycan is linked to Asn414. A helical transmembrane segment spans residues 421–441; it reads FLNCLQLIQLPFALIPVLTFV. At 442-458 the chain is on the cytoplasmic side; that stretch reads SDRNIMHEYKLASVSKV. The helical transmembrane segment at 459-479 threads the bilayer; sequence VSIVISLIILFINFYFLYSWI. Over 480–486 the chain is Extracellular; that stretch reads GSTFGYN. Residues 487–507 form a helical membrane-spanning segment; it reads AVSIPITIFCAIFYIIFIAYL. Residues 508 to 560 are Cytoplasmic-facing; it reads TYYCLVAMEFISPIQTKWLAEPIYHDFDAPWLEDSENPSTKNTISDDELSMRY.

It belongs to the NRAMP family. As to expression, expressed in dopaminergic neurons (at protein level). Expressed in intestine with a weaker expression in the most proximal and distal regions. Weakly expressed in the hyp1-6, hyp7 and hyp8-12 hypodermis and in head and tail neurons.

It is found in the apical cell membrane. It localises to the cytoplasmic vesicle membrane. Probable divalent metal ion transporter which regulates the uptake of several heavy metals such as Mn(2+), Al(3+) and iron. Plays a role in modulating Al(3+)-induced dopamine (DA) neuron degeneration through the intracellular sequestration of Al(3+). The sequence is that of NRAMP-like transporter smf-3 from Caenorhabditis elegans.